The following is a 133-amino-acid chain: MAKEFGRPQRVAQEMQKEIALILQREIKDPRLGMMTTVSGVEMSRDLAYAKVYVTFLNDKDEDAVKAGIKALQEASGFIRSLLGKAMRLRIVPELTFFYDNSLVEGMRMSNLVTSVVKHDEERRVNPDDSKED.

The protein belongs to the RbfA family. Monomer. Binds 30S ribosomal subunits, but not 50S ribosomal subunits or 70S ribosomes.

Its subcellular location is the cytoplasm. In terms of biological role, one of several proteins that assist in the late maturation steps of the functional core of the 30S ribosomal subunit. Associates with free 30S ribosomal subunits (but not with 30S subunits that are part of 70S ribosomes or polysomes). Required for efficient processing of 16S rRNA. May interact with the 5'-terminal helix region of 16S rRNA. In Shigella boydii serotype 18 (strain CDC 3083-94 / BS512), this protein is Ribosome-binding factor A.